The chain runs to 440 residues: Gamma-aminobutyric acid receptor subunit pi (440 aa).

An N-terminal signal peptide occupies residues 1–23; sequence MSYSLYLAFVCLNLLAQRMCIQG. At 24–241 the chain is on the extracellular side; the sequence is NQFNVEVSRS…LVLQFELRRN (218 aa). N-linked (GlcNAc...) asparagine glycans are attached at residues N43, N102, and N145. The cysteines at positions 160 and 174 are disulfide-linked. N-linked (GlcNAc...) asparagine glycans are attached at residues N196 and N228. The helical transmembrane segment at 242–262 threads the bilayer; that stretch reads VLYFILETYVPSTFLVVLSWV. The Cytoplasmic segment spans residues 263–270; the sequence is SFWISLES. Residues 271-290 form a helical membrane-spanning segment; sequence VPARTCIGVTTVLSMTTLMI. The Extracellular segment spans residues 291 to 301; the sequence is GSRTSLPNTNC. A helical membrane pass occupies residues 302–322; that stretch reads FIKAIDVYLGICFSFVFGALL. Over 323-419 the chain is Cytoplasmic; it reads EYAVAHYSSL…NPSNVDRYSK (97 aa). The chain crosses the membrane as a helical span at residues 420 to 440; it reads LLFPLIFMLANVFYWAYYMYF.

It belongs to the ligand-gated ion channel (TC 1.A.9) family. Gamma-aminobutyric acid receptor (TC 1.A.9.5) subfamily. GABRP sub-subfamily. As to quaternary structure, heteropentamer, formed by a combination of alpha (GABRA1-6), beta (GABRB1-3), gamma (GABRG1-3), delta (GABRD), epsilon (GABRE), rho (GABRR1-3), pi (GABRP) and theta (GABRQ) chains, each subunit exhibiting distinct physiological and pharmacological properties. Expressed in lungs, in alveolar epithelium.

Its subcellular location is the cell membrane. The protein resides in the apical cell membrane. The enzyme catalyses chloride(in) = chloride(out). Pi subunit of the heteropentameric ligand-gated chloride channel gated by gamma-aminobutyric acid (GABA). GABA-gated chloride channels, also named GABA(A) receptors (GABAAR), consist of five subunits arranged around a central pore and contain GABA active binding site(s) located at the alpha and beta subunit interfaces. When activated by GABA, GABAARs selectively allow the flow of chloride anions across the cell membrane down their electrochemical gradient. Pi-containing GABAARs are mostly located in peripheral tissues. In the uterus, pi subunits modulate uterus contraction by altering the sensitivity of GABAARs to pregnanolone. In the lungs, pi-containing GABAARs contribute to pulmonary fluid transport via luminal secretion of chloride. The chain is Gamma-aminobutyric acid receptor subunit pi from Rattus norvegicus (Rat).